The chain runs to 139 residues: Thioredoxin 2 (139 aa).

The segment at 5–18 is a zinc-finger region; it reads CTHCQAINRIPDDR. A Thioredoxin domain is found at 26–139; sequence GRCGHDLFDG…PFDSWLNESL (114 aa). A disulfide bridge links cysteine 64 with cysteine 67.

Belongs to the thioredoxin family.

It localises to the cytoplasm. It carries out the reaction [protein]-dithiol + NAD(+) = [protein]-disulfide + NADH + H(+). The catalysed reaction is [protein]-dithiol + NADP(+) = [protein]-disulfide + NADPH + H(+). Efficient electron donor for the essential enzyme ribonucleotide reductase. Is also able to reduce the interchain disulfide bridges of insulin. The polypeptide is Thioredoxin 2 (trxC) (Escherichia coli O6:H1 (strain CFT073 / ATCC 700928 / UPEC)).